Reading from the N-terminus, the 372-residue chain is Flagellar P-ring protein (372 aa).

The first 26 residues, 1–26 (MNLSSLPHRLLAAAVALCAIAAPASA), serve as a signal peptide directing secretion.

It belongs to the FlgI family. The basal body constitutes a major portion of the flagellar organelle and consists of four rings (L,P,S, and M) mounted on a central rod.

It is found in the periplasm. It localises to the bacterial flagellum basal body. In terms of biological role, assembles around the rod to form the L-ring and probably protects the motor/basal body from shearing forces during rotation. The sequence is that of Flagellar P-ring protein from Xanthomonas campestris pv. campestris (strain ATCC 33913 / DSM 3586 / NCPPB 528 / LMG 568 / P 25).